We begin with the raw amino-acid sequence, 285 residues long: Ribonuclease H1 (285 aa).

A disordered region spans residues 72-122 (RSSSSPDGSKGQESAHVQKLQVKTSKRPREPLGEEEEPPEPGAKHTRQDTE). The region spanning 135 to 281 (MGESVVVYTD…ADRLAREGAK (147 aa)) is the RNase H type-1 domain. Mg(2+) contacts are provided by Asp144, Glu185, Asp209, and Asp273.

This sequence belongs to the RNase H family. As to quaternary structure, monomer. The cofactor is Mg(2+).

The protein localises to the cytoplasm. The catalysed reaction is Endonucleolytic cleavage to 5'-phosphomonoester.. In the presence of magnesium, manganese is inhibitory. Functionally, endonuclease that specifically degrades the RNA of RNA-DNA hybrids. Plays a role in RNA polymerase II (RNAp II) transcription termination by degrading R-loop RNA-DNA hybrid formation at G-rich pause sites located downstream of the poly(A) site and behind the elongating RNAp II. The polypeptide is Ribonuclease H1 (Rnaseh1) (Rattus norvegicus (Rat)).